Reading from the N-terminus, the 340-residue chain is Major histocompatibility complex class I-related gene protein (340 aa).

Residues 1–22 form the signal peptide; that stretch reads MGELMAFLLPLIIVLMVKHSNS. An alpha-1 region spans residues 23–109; that stretch reads RTHSLRYFRL…KRLQRHYNHS (87 aa). Residues 23 to 201 form an antigen-binding cleft region; that stretch reads RTHSLRYFRL…EYGKDTLQRT (179 aa). Residues 23–302 are Extracellular-facing; that stretch reads RTHSLRYFRL…QESEAIPLVM (280 aa). Residues Tyr29 and Arg31 each coordinate 8-(9H-purin-6-yl)-2-oxa-8-azabicyclo[3.3.1]nona-3,6-diene-4,6-dicarbaldehyde. Arg31, Ser46, and Lys65 together coordinate 5-(2-oxoethylideneamino)-6-(D-ribitylamino)uracil. 5-(2-oxopropylideneamino)-6-(D-ribitylamino)uracil is bound by residues Arg31, Ser46, and Lys65. Residues Arg31, Ser46, and Lys65 each coordinate 7-hydroxy-6-methyl-8-(1-D-ribityl)lumazine. 8-(9H-purin-6-yl)-2-oxa-8-azabicyclo[3.3.1]nona-3,6-diene-4,6-dicarbaldehyde is bound by residues Lys65 and His80. Residue Lys65 coordinates 2-amino-4-oxopteridine-6-carbaldehyde. Lys65 contributes to the pyridoxal binding site. N-linked (GlcNAc...) asparagine glycosylation is present at Asn107. Residues 110–201 are alpha-2; the sequence is GSHTYQRMIG…EYGKDTLQRT (92 aa). Residue Arg116 coordinates 8-(9H-purin-6-yl)-2-oxa-8-azabicyclo[3.3.1]nona-3,6-diene-4,6-dicarbaldehyde. Residues Arg116, Tyr174, and Gln175 each coordinate 5-(2-oxoethylideneamino)-6-(D-ribitylamino)uracil. Positions 116, 174, and 175 each coordinate 5-(2-oxopropylideneamino)-6-(D-ribitylamino)uracil. The 7-hydroxy-6-methyl-8-(1-D-ribityl)lumazine site is built by Arg116, Tyr174, and Gln175. 2 disulfide bridges follow: Cys120–Cys183 and Cys222–Cys278. The interval 202 to 293 is alpha-3; sequence EPPLVRVNRK…GVHMVLQVPQ (92 aa). Residues 203–282 form the Ig-like C1-type domain; that stretch reads PPLVRVNRKE…SNLYSCHVEH (80 aa). A connecting peptide region spans residues 294–302; that stretch reads ESEAIPLVM. The chain crosses the membrane as a helical span at residues 303 to 323; that stretch reads KAVSGSIVFVIVLTGVGVLVW. Topologically, residues 324–340 are cytoplasmic; it reads RRRPREQNGAVYLPTPD.

The protein belongs to the MHC class I family. As to quaternary structure, heterotrimer that consists of MR1, B2M and metabolite antigen. Major classes of metabolite ligands presented by MR1 include riboflavin-related antigens, pyrimidines and ribityl lumazines, nucleobase adducts and folate derivatives. Forms reversible covalent Schiff base complexes with microbial pyrimidine-based metabolite, which serves as a molecular switch triggering complete folding, stable association with B2M and translocation of the ternary complex from endoplasmic reticulum to the plasma membrane. Alternatively, forms non-Schiff base complexes with ribityl lumazines. On antigen-presenting cells, the ternary complex interacts with TCR on MR1-restricted T cells. Interacts with TAPBP and TAPBPL chaperones in the endoplasmic reticulum. TAPBP associated or not with MHC class I peptide loading complex binds ligand-free MR1 or MR1-B2M complex, providing for stable MR1 pools ready for metabolite antigen processing. TAPBPL interacts with MR1 in a ligand-independent way; this interaction may stabilize MR1 pool and facilitate ligand loading and dissociation. Structurally, MR1-B2M heterodimer adopts a topology similar to classical MHC class I molecules, with alpha-1 and alpha-2 domains of MR1 forming the antigen-binding cleft composed of two alpha-helices resting on a floor of 7-stranded anti-parallel beta-pleated sheet. MR1-B2M heterodimer (via alpha-helices) interacts with TCR (via CDR domains). Post-translationally, N-glycosylated.

The protein localises to the cell membrane. Its subcellular location is the endoplasmic reticulum membrane. It is found in the golgi apparatus membrane. The protein resides in the early endosome membrane. It localises to the late endosome membrane. In terms of biological role, antigen-presenting molecule specialized in displaying microbial pyrimidine-based metabolites to alpha-beta T cell receptors (TCR) on innate-type mucosal-associated invariant T (MAIT) cells. In complex with B2M preferentially presents riboflavin-derived metabolites to semi-invariant TCRs on MAIT cells, guiding immune surveillance of the microbial metabolome at mucosal epithelial barriers. Signature pyrimidine-based microbial antigens are generated via non-enzymatic condensation of metabolite intermediates of the riboflavin pathway with by-products arising from other metabolic pathways such as glycolysis. Typical potent antigenic metabolites are 5-(2-oxoethylideneamino)-6-D-ribitylaminouracil (5-OE-RU) and 5-(2-oxopropylideneamino)-6-D-ribitylaminouracil (5-OP-RU), products of condensation of 5-amino-6-D-ribityaminouracil (5-A-RU) with glyoxal or methylglyoxal by-products, respectively. May present microbial antigens to various MAIT cell subsets, providing for unique recognition of diverse microbes, including pathogens that do not synthesize riboflavin. Upon antigen recognition, elicits rapid innate-type MAIT cell activation to eliminate pathogenic microbes by directly killing infected cells. During T cell development, drives thymic selection and post-thymic terminal differentiation of MAIT cells in a process dependent on commensal microflora. Acts as an immune sensor of cancer cell metabolome. May present a tumor-specific or -associated metabolite essential for cancer cell survival to a pan-cancer TCR on a non-MAIT CD8-positive T cell clone, triggering T cell-mediated killing of a wide range of cancer cell types. May present tumor-enriched pyridoxal and pyridoxal 5'-phosphate antigens, enabling preferential recognition of cancer cells. Presents nucleobase carbonyl adducts generated during oxidative stress. Captures M3Ade, a nucleobase adduct composed of one adenine modified by a malondialdehyde trimer, for recognition by MR1-restricted T cell clones expressing a polyclonal TCR repertoire. This Pongo pygmaeus (Bornean orangutan) protein is Major histocompatibility complex class I-related gene protein.